Reading from the N-terminus, the 206-residue chain is Uridine kinase (206 aa).

11–18 (GGTGSGKS) serves as a coordination point for ATP.

This sequence belongs to the uridine kinase family.

The protein resides in the cytoplasm. It carries out the reaction uridine + ATP = UMP + ADP + H(+). The catalysed reaction is cytidine + ATP = CMP + ADP + H(+). Its pathway is pyrimidine metabolism; CTP biosynthesis via salvage pathway; CTP from cytidine: step 1/3. It participates in pyrimidine metabolism; UMP biosynthesis via salvage pathway; UMP from uridine: step 1/1. In Clostridium botulinum (strain Langeland / NCTC 10281 / Type F), this protein is Uridine kinase.